A 264-amino-acid chain; its full sequence is MRALLGLLLVFGGCTFALYLLSTRLPLGPRLAAAGEPEGRSLWFPSDLAELRELSEVLREYRKEHQAYVFLLFCSAYLYKQGFAIPGSSFLNVLAGALFGPWLGLLLCCVLTSVGATGCYLLSSLFGKQLVISYFPDKVALLQKKVEENRNSLFFFLLFLRLFPMTPNWFLNLSAPILNIPIVQFFFSVLIGLIPYNFICVQTGSILSTLTSLDALFSWETVLKLLAIALVALVPGTLIKKFSQKRLALSETSDIGHPDRRKDA.

Positions 1–17 (MRALLGLLLVFGGCTFA) are cleaved as a signal peptide. 5 consecutive transmembrane segments (helical) span residues 67–87 (AYVFLLFCSAYLYKQGFAIPG), 100–122 (GPWLGLLLCCVLTSVGATGCYLL), 153–173 (LFFFLLFLRLFPMTPNWFLNL), 175–195 (APILNIPIVQFFFSVLIGLIP), and 219–239 (WETVLKLLAIALVALVPGTLI). The tract at residues 96–207 (GALFGPWLGL…FICVQTGSIL (112 aa)) is VTT domain.

It belongs to the TMEM41 family.

It is found in the membrane. The sequence is that of Transmembrane protein 41A (Tmem41a) from Mus musculus (Mouse).